Reading from the N-terminus, the 189-residue chain is GMP synthase [glutamine-hydrolyzing] subunit A (189 aa).

The region spanning Arg3 to Ala187 is the Glutamine amidotransferase type-1 domain. The Nucleophile role is filled by Cys73. Catalysis depends on residues His161 and Glu163.

Heterodimer composed of a glutamine amidotransferase subunit (A) and a GMP-binding subunit (B).

The enzyme catalyses XMP + L-glutamine + ATP + H2O = GMP + L-glutamate + AMP + diphosphate + 2 H(+). It functions in the pathway purine metabolism; GMP biosynthesis; GMP from XMP (L-Gln route): step 1/1. Its function is as follows. Catalyzes the synthesis of GMP from XMP. The chain is GMP synthase [glutamine-hydrolyzing] subunit A from Haloarcula marismortui (strain ATCC 43049 / DSM 3752 / JCM 8966 / VKM B-1809) (Halobacterium marismortui).